Consider the following 188-residue polypeptide: Ion-translocating oxidoreductase complex subunit B (188 aa).

Residues 1-23 (MIEAAVSMSALGLGLGLLLGVAA) form a hydrophobic region. The 4Fe-4S domain occupies 29–88 (ESPPILDAIEGILPGTNCGACGYPGCRGLAEAMSEGAAPVTACAPGGRDVALALAAIVET). The [4Fe-4S] cluster site is built by Cys-46, Cys-49, Cys-54, Cys-71, Cys-113, Cys-116, Cys-119, Cys-123, Cys-143, Cys-146, Cys-149, and Cys-153. 4Fe-4S ferredoxin-type domains are found at residues 104–133 (TVAF…GANR) and 134–163 (QIHT…ARVK).

Belongs to the 4Fe4S bacterial-type ferredoxin family. RnfB subfamily. As to quaternary structure, the complex is composed of six subunits: RnfA, RnfB, RnfC, RnfD, RnfE and RnfG. [4Fe-4S] cluster is required as a cofactor.

It localises to the cellular chromatophore membrane. Functionally, part of a membrane-bound complex that couples electron transfer with translocation of ions across the membrane. This chain is Ion-translocating oxidoreductase complex subunit B, found in Cereibacter sphaeroides (strain ATCC 17029 / ATH 2.4.9) (Rhodobacter sphaeroides).